A 234-amino-acid chain; its full sequence is 1-(5-phosphoribosyl)-5-[(5-phosphoribosylamino)methylideneamino] imidazole-4-carboxamide isomerase (234 aa).

Asp-9 (proton acceptor) is an active-site residue. Asp-131 functions as the Proton donor in the catalytic mechanism.

Belongs to the HisA/HisF family.

Its subcellular location is the cytoplasm. The enzyme catalyses 1-(5-phospho-beta-D-ribosyl)-5-[(5-phospho-beta-D-ribosylamino)methylideneamino]imidazole-4-carboxamide = 5-[(5-phospho-1-deoxy-D-ribulos-1-ylimino)methylamino]-1-(5-phospho-beta-D-ribosyl)imidazole-4-carboxamide. It participates in amino-acid biosynthesis; L-histidine biosynthesis; L-histidine from 5-phospho-alpha-D-ribose 1-diphosphate: step 4/9. The protein is 1-(5-phosphoribosyl)-5-[(5-phosphoribosylamino)methylideneamino] imidazole-4-carboxamide isomerase of Staphylococcus carnosus (strain TM300).